Reading from the N-terminus, the 201-residue chain is Regulator of G-protein signaling 1 (201 aa).

The RGS domain occupies 75 to 191 (SLEKLLVSEE…LKSEIFFRLA (117 aa)).

Its subcellular location is the cell membrane. The protein localises to the cytoplasm. The protein resides in the cytosol. Regulates G protein-coupled receptor signaling cascades, including signaling downstream of the N-formylpeptide chemoattractant receptors and leukotriene receptors. Inhibits B cell chemotaxis. Inhibits signal transduction by increasing the GTPase activity of G protein alpha subunits, thereby driving them into their inactive GDP-bound form. The chain is Regulator of G-protein signaling 1 (rgs1) from Xenopus laevis (African clawed frog).